Here is a 490-residue protein sequence, read N- to C-terminus: Ribulose bisphosphate carboxylase large chain (490 aa).

Substrate contacts are provided by Asn-127 and Thr-177. Lys-179 acts as the Proton acceptor in catalysis. Lys-181 provides a ligand contact to substrate. Positions 205, 207, and 208 each coordinate Mg(2+). Lys-205 is modified (N6-carboxylysine). Residue His-297 is the Proton acceptor of the active site. The substrate site is built by Arg-298, His-330, and Ser-382.

It belongs to the RuBisCO large chain family. Type I subfamily. As to quaternary structure, heterohexadecamer of 8 large chains and 8 small chains. The cofactor is Mg(2+).

The protein localises to the plastid. It is found in the chloroplast. It carries out the reaction 2 (2R)-3-phosphoglycerate + 2 H(+) = D-ribulose 1,5-bisphosphate + CO2 + H2O. It catalyses the reaction D-ribulose 1,5-bisphosphate + O2 = 2-phosphoglycolate + (2R)-3-phosphoglycerate + 2 H(+). In terms of biological role, ruBisCO catalyzes two reactions: the carboxylation of D-ribulose 1,5-bisphosphate, the primary event in carbon dioxide fixation, as well as the oxidative fragmentation of the pentose substrate in the photorespiration process. Both reactions occur simultaneously and in competition at the same active site. The polypeptide is Ribulose bisphosphate carboxylase large chain (Phaeodactylum tricornutum (strain CCAP 1055/1)).